Reading from the N-terminus, the 192-residue chain is Imidazoleglycerol-phosphate dehydratase (192 aa).

It belongs to the imidazoleglycerol-phosphate dehydratase family.

The protein localises to the cytoplasm. It catalyses the reaction D-erythro-1-(imidazol-4-yl)glycerol 3-phosphate = 3-(imidazol-4-yl)-2-oxopropyl phosphate + H2O. It functions in the pathway amino-acid biosynthesis; L-histidine biosynthesis; L-histidine from 5-phospho-alpha-D-ribose 1-diphosphate: step 6/9. This is Imidazoleglycerol-phosphate dehydratase from Methanocella arvoryzae (strain DSM 22066 / NBRC 105507 / MRE50).